A 405-amino-acid polypeptide reads, in one-letter code: Endo-1,4-beta-xylanase 5 (405 aa).

Residues 1 to 22 (MTRLATLITLAGLLAVSPGAYA) form the signal peptide. N-linked (GlcNAc...) asparagine glycosylation is found at asparagine 27 and asparagine 69. The 321-residue stretch at 32-352 (STGAEGLNSL…KPAYTSVSSL (321 aa)) folds into the GH10 domain. Glutamate 166 functions as the Proton donor in the catalytic mechanism. The N-linked (GlcNAc...) asparagine glycan is linked to asparagine 171. Glutamate 273 functions as the Nucleophile in the catalytic mechanism. A disulfide bridge links cysteine 302 with cysteine 308. The GPI-anchor amidated glycine moiety is linked to residue glycine 380. Residues 381–405 (AGRETVSIAGLTLALSSLAFGMFML) constitute a propeptide, removed in mature form.

It belongs to the glycosyl hydrolase 10 (cellulase F) family.

The protein localises to the cell membrane. It localises to the secreted. It carries out the reaction Endohydrolysis of (1-&gt;4)-beta-D-xylosidic linkages in xylans.. Its pathway is glycan degradation; xylan degradation. Endo-1,4-beta-xylanase involved in the hydrolysis of xylan, a major structural heterogeneous polysaccharide found in plant biomass representing the second most abundant polysaccharide in the biosphere, after cellulose. The protein is Endo-1,4-beta-xylanase 5 (XYL5) of Pyricularia grisea (Crabgrass-specific blast fungus).